Reading from the N-terminus, the 2325-residue chain is Centriolin (2325 aa).

The tract at residues Met-1–Arg-33 is disordered. Over residues Pro-16–Arg-33 the composition is skewed to low complexity. LRR repeat units lie at residues Lys-126–Leu-147, Lys-148–Cys-169, Asn-170–Lys-191, and Ser-194–Lys-215. An LRRCT domain is found at Asn-228 to Arg-266. 2 coiled-coil regions span residues Phe-267–Thr-343 and Leu-435–Val-799. A Phosphoserine modification is found at Ser-831. A coiled-coil region spans residues Leu-851–Thr-1101. The segment at Pro-1150 to Pro-1241 is disordered. Over residues Ser-1224–Glu-1235 the composition is skewed to acidic residues. A coiled-coil region spans residues Glu-1317 to Cys-2255. Ser-1475 carries the phosphoserine modification. Residues Met-1948 to Arg-2118 form a required for centrosome localization region. Positions Gln-1985 to Arg-2325 are sufficient for interaction with HOOK2. The disordered stretch occupies residues Val-2288–Arg-2325. A compositionally biased stretch (low complexity) spans Ser-2290–Leu-2314. Polar residues predominate over residues Gly-2315–Arg-2325.

As to quaternary structure, interacts with HOOK2. Interacts with EXOC6 and SNAPIN. Associates with the exocyst complex. As to expression, widely expressed with highest levels in testis and trachea.

It is found in the cytoplasm. Its subcellular location is the cytoskeleton. It localises to the microtubule organizing center. The protein resides in the centrosome. The protein localises to the midbody. It is found in the midbody ring. In terms of biological role, involved in cell cycle progression and cytokinesis. During the late steps of cytokinesis, anchors exocyst and SNARE complexes at the midbody, thereby allowing secretory vesicle-mediated abscission. The sequence is that of Centriolin (CNTRL) from Homo sapiens (Human).